A 367-amino-acid chain; its full sequence is Undecaprenyl-phosphate alpha-N-acetylglucosaminyl 1-phosphate transferase (367 aa).

The next 10 membrane-spanning stretches (helical) occupy residues 3–23, 46–66, 69–89, 132–152, 158–178, 187–207, 213–233, 242–262, 294–314, and 318–338; these read LLTV…FLFF, LIPL…FGIV, YIPH…IGAL, VLGP…INAF, IDGL…MILW, IWCF…LGIL, VFMG…ILLE, ISPV…VAIM, AFVL…LAEY, and VPEW…GYCI.

The protein belongs to the glycosyltransferase 4 family. WecA subfamily. Mg(2+) is required as a cofactor. It depends on Mn(2+) as a cofactor.

The protein resides in the cell inner membrane. It carries out the reaction di-trans,octa-cis-undecaprenyl phosphate + UDP-N-acetyl-alpha-D-glucosamine = N-acetyl-alpha-D-glucosaminyl-di-trans,octa-cis-undecaprenyl diphosphate + UMP. The protein operates within bacterial outer membrane biogenesis; LPS O-antigen biosynthesis. Its pathway is bacterial outer membrane biogenesis; enterobacterial common antigen biosynthesis. In terms of biological role, catalyzes the transfer of the GlcNAc-1-phosphate moiety from UDP-GlcNAc onto the carrier lipid undecaprenyl phosphate (C55-P), yielding GlcNAc-pyrophosphoryl-undecaprenyl (GlcNAc-PP-C55). In Escherichia coli O6:H1 (strain CFT073 / ATCC 700928 / UPEC), this protein is Undecaprenyl-phosphate alpha-N-acetylglucosaminyl 1-phosphate transferase.